The primary structure comprises 204 residues: LexA repressor (204 aa).

Residues 27-47 (VREIGEAVGLASSSTVHGHLA) constitute a DNA-binding region (H-T-H motif). Residues Ser126 and Lys164 each act as for autocatalytic cleavage activity in the active site.

It belongs to the peptidase S24 family. Homodimer.

The enzyme catalyses Hydrolysis of Ala-|-Gly bond in repressor LexA.. In terms of biological role, represses a number of genes involved in the response to DNA damage (SOS response), including recA and lexA. In the presence of single-stranded DNA, RecA interacts with LexA causing an autocatalytic cleavage which disrupts the DNA-binding part of LexA, leading to derepression of the SOS regulon and eventually DNA repair. This chain is LexA repressor, found in Listeria monocytogenes serotype 4b (strain CLIP80459).